We begin with the raw amino-acid sequence, 95 residues long: Parvalbumin beta 3 (95 aa).

An N-acetylalanine modification is found at Ala-1. EF-hand domains follow at residues Phe-39–Gly-66 and Asp-77–Ala-95. Asp-44, Asp-46, Ser-48, Phe-50, Glu-52, Glu-55, Asp-77, Asp-79, Asp-81, Met-83, and Glu-88 together coordinate Ca(2+).

This sequence belongs to the parvalbumin family.

In muscle, parvalbumin is thought to be involved in relaxation after contraction. It binds two calcium ions. The protein is Parvalbumin beta 3 of Merluccius paradoxus (Deep-water Cape hake).